The following is a 523-amino-acid chain: Ribosomal protein uS12 methylthiotransferase RimO (523 aa).

Residues 7–134 (RRVALITLGC…IATHLAAVLA (128 aa)) form the MTTase N-terminal domain. [4Fe-4S] cluster-binding residues include Cys16, Cys52, Cys97, Cys192, Cys196, and Cys199. The Radical SAM core domain occupies 178-409 (LTAGPVAVLK…DLVEQLTAAR (232 aa)). The 82-residue stretch at 411–492 (DARIGSRVQV…GVDLIAEFIA (82 aa)) folds into the TRAM domain.

The protein belongs to the methylthiotransferase family. RimO subfamily. [4Fe-4S] cluster serves as cofactor.

The protein localises to the cytoplasm. It carries out the reaction L-aspartate(89)-[ribosomal protein uS12]-hydrogen + (sulfur carrier)-SH + AH2 + 2 S-adenosyl-L-methionine = 3-methylsulfanyl-L-aspartate(89)-[ribosomal protein uS12]-hydrogen + (sulfur carrier)-H + 5'-deoxyadenosine + L-methionine + A + S-adenosyl-L-homocysteine + 2 H(+). Its function is as follows. Catalyzes the methylthiolation of an aspartic acid residue of ribosomal protein uS12. The polypeptide is Ribosomal protein uS12 methylthiotransferase RimO (Frankia casuarinae (strain DSM 45818 / CECT 9043 / HFP020203 / CcI3)).